The primary structure comprises 492 residues: N-succinylglutamate 5-semialdehyde dehydrogenase (492 aa).

Residue 220–225 (GSSTTG) participates in NAD(+) binding. Catalysis depends on residues E243 and C277.

Belongs to the aldehyde dehydrogenase family. AstD subfamily.

It carries out the reaction N-succinyl-L-glutamate 5-semialdehyde + NAD(+) + H2O = N-succinyl-L-glutamate + NADH + 2 H(+). It participates in amino-acid degradation; L-arginine degradation via AST pathway; L-glutamate and succinate from L-arginine: step 4/5. Catalyzes the NAD-dependent reduction of succinylglutamate semialdehyde into succinylglutamate. The sequence is that of N-succinylglutamate 5-semialdehyde dehydrogenase from Klebsiella pneumoniae subsp. pneumoniae (strain ATCC 700721 / MGH 78578).